Reading from the N-terminus, the 4981-residue chain is Protocadherin Fat 4 (4981 aa).

The first 42 residues, 1–42, serve as a signal peptide directing secretion; sequence MNLAANRAPGRRRLPLPSPSLCQLLRVWGLLSLLPGSARVQA. Residues 43-4505 are Extracellular-facing; that stretch reads AEQRQVFQVM…PDEISLPLWA (4463 aa). Cadherin domains are found at residues 44–135, 136–250, 251–353, 359–475, 476–582, 584–689, 690–793, 794–893, 894–996, 997–1100, 1101–1210, 1211–1315, 1316–1420, 1421–1529, 1529–1629, 1630–1740, 1741–1841, 1842–1944, 1945–2051, 2051–2154, 2155–2259, 2260–2364, 2365–2468, 2469–2569, 2570–2671, 2672–2775, 2775–2874, 2875–2985, 2986–3091, 3092–3196, 3197–3300, 3301–3406, 3407–3512, and 3511–3622; these read EQRQ…APVF, PDPS…PPVF, GSSH…DPVV, PATS…PPVF, EQQV…KPVF, QPEG…SPVF, YPVQ…PPVF, SQAA…APHF, LQAV…PPVF, DQIS…RPLF, NSTN…APKF, LKDF…TPSF, PKST…PPSF, PPGD…VPMF, FISQ…GPVF, TQTK…PPVF, PTDT…TPRF, SRPV…PPVF, SMSS…PPMF, FLSP…NPVF, AQAM…VPVF, ELSP…VPTF, ANNM…PPRF, QHHP…FPKV, RAKE…APTF, EEDP…APRF, FSQI…TPRF, SRPS…PPQF, LQNK…TPEF, SQNH…SPVF, VPDE…VPRF, VSKL…PPVF, SLST…GPVL, and VLTV…VEIF. N-linked (GlcNAc...) asparagine glycosylation is found at asparagine 84 and asparagine 237. N-linked (GlcNAc...) asparagine glycosylation is found at asparagine 393, asparagine 416, asparagine 435, asparagine 483, asparagine 551, asparagine 615, asparagine 676, asparagine 721, asparagine 825, asparagine 880, asparagine 948, asparagine 1085, asparagine 1101, asparagine 1104, asparagine 1225, asparagine 1296, asparagine 1389, and asparagine 1514. Asparagine 1828, asparagine 1899, asparagine 1967, and asparagine 2119 each carry an N-linked (GlcNAc...) asparagine glycan. N-linked (GlcNAc...) asparagine glycans are attached at residues asparagine 2387 and asparagine 2432. Residues asparagine 2923, asparagine 2939, asparagine 3038, asparagine 3142, asparagine 3219, asparagine 3394, and asparagine 3479 are each glycosylated (N-linked (GlcNAc...) asparagine). N-linked (GlcNAc...) asparagine glycans are attached at residues asparagine 3708 and asparagine 3760. One can recognise an EGF-like 1 domain in the interval 3804–3862; that stretch reads DHDPCIHGPCQNGGSCLRRLAVGSALKIQESLPVIIVANEPLQPSQCKCVPGYAGSWCE. 12 disulfides stabilise this stretch: cysteine 3808/cysteine 3819, cysteine 3813/cysteine 3850, cysteine 3852/cysteine 3861, cysteine 3868/cysteine 3879, cysteine 3873/cysteine 3888, cysteine 3890/cysteine 3899, cysteine 3906/cysteine 3917, cysteine 3911/cysteine 3926, cysteine 3928/cysteine 3937, cysteine 3944/cysteine 3955, cysteine 3949/cysteine 3964, and cysteine 3966/cysteine 3975. The EGF-like 2; calcium-binding domain maps to 3864–3900; sequence DIDECLPAPCHNGGTCHNLVGGFSCSCPEGFTGRACE. The EGF-like 3; calcium-binding domain occupies 3902-3938; sequence DINECLPSPCKHGAVCQNFPGGFNCVCKTGYTGKMCE. An EGF-like 4 domain is found at 3940–3976; the sequence is SVNYCECNPCFNGGSCQSGVESYYCHCPFGVFGKHCE. Positions 3977–4161 constitute a Laminin G-like 1 domain; that stretch reads LNSYGFEELS…LAAQGILDQC (185 aa). The N-linked (GlcNAc...) asparagine glycan is linked to asparagine 4019. 4 disulfide bridges follow: cysteine 4135-cysteine 4161, cysteine 4168-cysteine 4179, cysteine 4173-cysteine 4188, and cysteine 4190-cysteine 4199. An EGF-like 5 domain is found at 4164–4200; it reads LEGTCARNPCQHGGTCVDFWSWQQCQCMEGLTGKYCE. The Laminin G-like 2 domain maps to 4219-4399; that stretch reads YHMSQSEKRE…KTDPSVKIGC (181 aa). 2 N-linked (GlcNAc...) asparagine glycosylation sites follow: asparagine 4269 and asparagine 4314. 4 cysteine pairs are disulfide-bonded: cysteine 4366–cysteine 4399, cysteine 4431–cysteine 4442, cysteine 4436–cysteine 4452, and cysteine 4454–cysteine 4463. One can recognise an EGF-like 6 domain in the interval 4427–4464; the sequence is PPGDCASHPCQNGGSCEPGLLSGYTCSCPESHTGRTCE. The chain crosses the membrane as a helical span at residues 4506-4526; it reads VPAIVGSCATALALLVLSLIL. At 4527 to 4981 the chain is on the cytoplasmic side; the sequence is CNQCRGKMPK…AKDGEAEQYV (455 aa). Disordered regions lie at residues 4535–4585, 4677–4713, 4753–4773, 4796–4911, and 4957–4981; these read PKNP…PDII, PSSY…KPSA, RRSK…SRLK, RLNT…PAAA, and AAGN…EQYV. Residues 4677 to 4701 show a composition bias toward polar residues; that stretch reads PSSYGQGLRTSSLSHSACPTPNPLS. Residues 4708-4797 are necessary and sufficient for interaction with MPDZ; it reads FSKPSAFYRN…GLSIEEVERL (90 aa). Basic and acidic residues predominate over residues 4811 to 4823; it reads DHGRSSSEEDCRR. Serine 4878 bears the Phosphoserine mark. Residues 4971-4981 show a composition bias toward basic and acidic residues; the sequence is AAKDGEAEQYV.

In terms of assembly, heterophilic interaction with DCHS1; this interaction affects their respective protein levels. Interacts (via cytoplasmic domain) with MPDZ. Forms a complex with PALS1 and MPDZ. As to expression, widely expressed.

It is found in the membrane. Its function is as follows. Cadherins are cell-cell interaction molecules. FAT4 plays a role in the maintenance of planar cell polarity as well as in inhibition of YAP1-mediated neuroprogenitor cell proliferation and differentiation. The chain is Protocadherin Fat 4 (Fat4) from Mus musculus (Mouse).